The sequence spans 1012 residues: RNA-binding protein 26 (1012 aa).

Residue Lys-94 forms a Glycyl lysine isopeptide (Lys-Gly) (interchain with G-Cter in SUMO2) linkage. The stretch at 98–127 (LQHQEKDIKKEELTKEEEREKKFSRRLNHS) forms a coiled coil. Residue Lys-106 forms a Glycyl lysine isopeptide (Lys-Gly) (interchain with G-Cter in SUMO1); alternate linkage. Residue Lys-106 forms a Glycyl lysine isopeptide (Lys-Gly) (interchain with G-Cter in SUMO2); alternate linkage. A compositionally biased stretch (basic and acidic residues) spans 106-118 (KKEELTKEEEREK). Positions 106–236 (KKEELTKEEE…PLENNYTPVS (131 aa)) are disordered. Ser-127 is subject to Phosphoserine. Positions 134–168 (RYRDNRSRDERKKDDRSRKRDYDRNPPRRDSYRDR) are enriched in basic and acidic residues. A compositionally biased stretch (basic residues) spans 169–186 (YNRRRGRSRSYSRSRSRS). Composition is skewed to basic and acidic residues over residues 187 to 201 (WSKERLRDRDRDRSR) and 209 to 227 (RSRERDLVKPKYDLDRTDP). Residues 288-316 (PMPKKRCRDYDEKGFCMRGDMCPFDHGSD) form a C3H1-type zinc finger. Residues 334-388 (QPPVVEGPPPPGLPPPPPILTPPPVNLRPPVPPPGPLPPSLPPVTGPPPPLPPLQ) are compositionally biased toward pro residues. 2 disordered regions span residues 334–404 (QPPV…SSVP) and 465–520 (IGLT…NFNR). A compositionally biased stretch (low complexity) spans 394–404 (APPNSATSSVP). A Phosphoserine modification is found at Ser-501. The residue at position 515 (Lys-515) is an N6-acetyllysine. Position 523 is a phosphoserine (Ser-523). The 75-residue stretch at 537–611 (TKLELRKVPP…RFIKVYWHRE (75 aa)) folds into the RRM 1 domain. Residue Ser-621 is modified to Phosphoserine. Positions 647-667 (PVPSATTEPAEAQSATSELPQ) are disordered. Coiled-coil stretches lie at residues 724–800 (DNNE…KSTS) and 828–852 (KKMQAGEEVTELRRKYTELQLEAAK). The segment at 858–889 (SGRGRGIHTRGRGTAHGRGRGRGRGRGVPGHA) is disordered. The segment covering 862 to 882 (RGIHTRGRGTAHGRGRGRGRG) has biased composition (basic residues). One can recognise an RRM 2 domain in the interval 896 to 965 (RALEISAFTE…QDLKLAWNKP (70 aa)). The interval 970-1012 (SAVDTEEAEPDEEEFQEESLVDDSLLQDDDEEEEDNESRSWRR) is disordered. Over residues 973–1005 (DTEEAEPDEEEFQEESLVDDSLLQDDDEEEEDN) the composition is skewed to acidic residues.

In terms of tissue distribution, expressed in testis and ovary.

In terms of biological role, may be involved in the turnover of nuclear polyadenylated (pA+) RNA. This chain is RNA-binding protein 26, found in Mus musculus (Mouse).